Here is a 204-residue protein sequence, read N- to C-terminus: MEFNEKLQQLRTGKNLTQEQLAEQLYVSRTAISKWESGKGYPNMESLKCISKFFSVTIDELLSGEELITLAETENRSNLKKIYNYIYGILDMMAVAFIFLPLYGNSVGGYVYAVNLLSFTATTPFNLAVYWSAFAALIIIGIGKIISTHLDKEKWGGIATKCSLTITALAVCFFAAAREPYITVLVFLLLIGKIFVWIKQMGMK.

The Cytoplasmic portion of the chain corresponds to 1 to 81 (MEFNEKLQQL…ETENRSNLKK (81 aa)). The 55-residue stretch at 7 to 61 (LQQLRTGKNLTQEQLAEQLYVSRTAISKWESGKGYPNMESLKCISKFFSVTIDEL) folds into the HTH cro/C1-type domain. The segment at residues 18 to 37 (QEQLAEQLYVSRTAISKWES) is a DNA-binding region (H-T-H motif). Residues 82–102 (IYNYIYGILDMMAVAFIFLPL) form a helical membrane-spanning segment. Residues 103–126 (YGNSVGGYVYAVNLLSFTATTPFN) are Extracellular-facing. A helical membrane pass occupies residues 127-147 (LAVYWSAFAALIIIGIGKIIS). At 148-154 (THLDKEK) the chain is on the cytoplasmic side. Residues 155–175 (WGGIATKCSLTITALAVCFFA) form a helical membrane-spanning segment. Topologically, residues 176-181 (AAREPY) are extracellular. Residues 182-202 (ITVLVFLLLIGKIFVWIKQMG) form a helical membrane-spanning segment. Over 203 to 204 (MK) the chain is Cytoplasmic.

Its subcellular location is the cell membrane. Constitutively bound to the bcrABD promoter. Requires bacitracin for activation, probably through a conformational change, such as the oligomerization of inactive dimers to form active tetramers. In terms of biological role, functions both as a membrane-bound sensor and a transducer of bacitracin availability to activate transcription of the bcrABD operon in the presence of bacitracin. Binds specifically to two inverted repeat sequences on the bcrABD promoter, irrespective of bacitracin concentration. This Enterococcus faecalis (Streptococcus faecalis) protein is HTH-type transcriptional activator BcrR.